The sequence spans 721 residues: Peroxisomal fatty acid beta-oxidation multifunctional protein AIM1 (721 aa).

The active-site Nucleophile is Glu116. Glu136 acts as the Proton acceptor in catalysis. Residues 719-721 (SKL) carry the Microbody targeting signal motif.

The protein in the N-terminal section; belongs to the enoyl-CoA hydratase/isomerase family. This sequence in the central section; belongs to the 3-hydroxyacyl-CoA dehydrogenase family. In terms of tissue distribution, widely expressed.

It localises to the peroxisome. The catalysed reaction is a (3S)-3-hydroxyacyl-CoA = a (2E)-enoyl-CoA + H2O. The enzyme catalyses a 4-saturated-(3S)-3-hydroxyacyl-CoA = a (3E)-enoyl-CoA + H2O. It carries out the reaction (3S)-3-hydroxybutanoyl-CoA = (2E)-butenoyl-CoA + H2O. It catalyses the reaction (3S)-hydroxyoctanoyl-CoA = (2E)-octenoyl-CoA + H2O. The catalysed reaction is (3S)-3-hydroxydodecanoyl-CoA = (2E)-dodecenoyl-CoA + H2O. The enzyme catalyses (3S)-hydroxytetradecanoyl-CoA = (2E)-tetradecenoyl-CoA + H2O. It carries out the reaction (3S)-hydroxyhexanoyl-CoA = (2E)-hexenoyl-CoA + H2O. It catalyses the reaction a (3Z)-enoyl-CoA = a 4-saturated (2E)-enoyl-CoA. The catalysed reaction is a (3E)-enoyl-CoA = a 4-saturated (2E)-enoyl-CoA. The enzyme catalyses (3S)-3-hydroxybutanoyl-CoA = (3R)-3-hydroxybutanoyl-CoA. It carries out the reaction a (3S)-3-hydroxyacyl-CoA + NAD(+) = a 3-oxoacyl-CoA + NADH + H(+). It catalyses the reaction (3S)-3-hydroxybutanoyl-CoA + NAD(+) = acetoacetyl-CoA + NADH + H(+). The catalysed reaction is (3S)-hydroxyhexanoyl-CoA + NAD(+) = 3-oxohexanoyl-CoA + NADH + H(+). The enzyme catalyses (3S)-hydroxyoctanoyl-CoA + NAD(+) = 3-oxooctanoyl-CoA + NADH + H(+). It carries out the reaction (3S)-3-hydroxydodecanoyl-CoA + NAD(+) = 3-oxododecanoyl-CoA + NADH + H(+). It catalyses the reaction (3S)-hydroxytetradecanoyl-CoA + NAD(+) = 3-oxotetradecanoyl-CoA + NADH + H(+). The protein operates within lipid metabolism; fatty acid beta-oxidation. Functionally, involved in peroxisomal fatty acid beta-oxidation. Required for wound-induced jasmonate biosynthesis. Possesses enoyl-CoA hydratase activity against short chain substrates (C4-C6) and 3-hydroxyacyl-CoA dehydrogenase activity against chains of variable sizes (C6-C16). Possesses cinnamoyl-CoA hydratase activity and is involved in the peroxisomal beta-oxidation pathway for the biosynthesis of benzoic acid (BA). Required for the accumulation in seeds of benzoylated glucosinolates (BGs) and substituted hydroxybenzoylated choline esters, which are BA-containing secondary metabolites. Required for salicylic acid (SA) in seeds. The chain is Peroxisomal fatty acid beta-oxidation multifunctional protein AIM1 (AIM1) from Arabidopsis thaliana (Mouse-ear cress).